The following is a 211-amino-acid chain: BAG family molecular chaperone regulator 2 (211 aa).

At alanine 2 the chain carries N-acetylalanine. Residues serine 20, serine 31, and serine 73 each carry the phosphoserine modification. Residues 20–61 (SMADRSSRLLESLDQLELRVEALREAATAVEQEKEVLLEMIH) are a coiled coil. The BAG domain occupies 109-189 (SLKHATRIID…NIENADKAIK (81 aa)).

In terms of assembly, binds to the ATPase domain of HSP/HSC70 chaperones. May interact with NWD1. Interacts with HSPA1A (via NBD), HSPA1B (via NBD) and HSPA8. May interact with DNJC9; the interaction seems to be histone-dependent.

In terms of biological role, co-chaperone for HSP70 and HSC70 chaperone proteins. Acts as a nucleotide-exchange factor (NEF) promoting the release of ADP from the HSP70 and HSC70 proteins thereby triggering client/substrate protein release. This Bos taurus (Bovine) protein is BAG family molecular chaperone regulator 2.